The sequence spans 879 residues: Phosphoenolpyruvate carboxylase (879 aa).

Catalysis depends on residues His137 and Lys545.

Belongs to the PEPCase type 1 family. It depends on Mg(2+) as a cofactor.

The enzyme catalyses oxaloacetate + phosphate = phosphoenolpyruvate + hydrogencarbonate. Forms oxaloacetate, a four-carbon dicarboxylic acid source for the tricarboxylic acid cycle. The chain is Phosphoenolpyruvate carboxylase from Yersinia enterocolitica serotype O:8 / biotype 1B (strain NCTC 13174 / 8081).